We begin with the raw amino-acid sequence, 146 residues long: MVSFSFPEIYDVSDDVLVSDSRRSVAVEVEEKVQVINVKVLRLIEAVDEDRVGVKVMFRLCYRYRRELKITLLGCKMELWTSLKSSGKYSVQSLLQRKLNGICVSNYCIGIDMFVSNVKELINRCKWITSVQGVNPICCLYHMDEE.

This sequence belongs to the nanovirus U1 protein family.

This chain is Protein U1 (DNA-U1), found in Subterranean clover stunt virus (strain F) (SCSV).